A 316-amino-acid chain; its full sequence is Homoserine kinase (316 aa).

Residue 97-107 (PPARGLGSSAS) participates in ATP binding.

This sequence belongs to the GHMP kinase family. Homoserine kinase subfamily.

It is found in the cytoplasm. It carries out the reaction L-homoserine + ATP = O-phospho-L-homoserine + ADP + H(+). The protein operates within amino-acid biosynthesis; L-threonine biosynthesis; L-threonine from L-aspartate: step 4/5. Functionally, catalyzes the ATP-dependent phosphorylation of L-homoserine to L-homoserine phosphate. In Prochlorococcus marinus (strain MIT 9303), this protein is Homoserine kinase.